The chain runs to 67 residues: UPF0337 protein SP_1805 (67 aa).

Residues 1-30 (MSVEEKLNQAKGSIKEGVGKAIGDEKMEKE) form a disordered region.

Belongs to the UPF0337 (CsbD) family.

The polypeptide is UPF0337 protein SP_1805 (Streptococcus pneumoniae serotype 4 (strain ATCC BAA-334 / TIGR4)).